Reading from the N-terminus, the 262-residue chain is Ribonuclease 3 (262 aa).

Residues 18–141 (LATFLKNLDI…LVGAIYEDMG (124 aa)) form the RNase III domain. A Mg(2+)-binding site is contributed by Glu59. Asp63 is a catalytic residue. 2 residues coordinate Mg(2+): Asp127 and Glu130. Residue Glu130 is part of the active site.

This sequence belongs to the ribonuclease III family. As to quaternary structure, homodimer. Mg(2+) serves as cofactor.

The protein resides in the cytoplasm. It catalyses the reaction Endonucleolytic cleavage to 5'-phosphomonoester.. Functionally, digests double-stranded RNA. Involved in the processing of primary rRNA transcript to yield the immediate precursors to the large and small rRNAs (23S and 16S). Processes some mRNAs, and tRNAs when they are encoded in the rRNA operon. Processes pre-crRNA and tracrRNA of type II CRISPR loci if present in the organism. This chain is Ribonuclease 3, found in Mycoplasma genitalium (strain ATCC 33530 / DSM 19775 / NCTC 10195 / G37) (Mycoplasmoides genitalium).